We begin with the raw amino-acid sequence, 101 residues long: Large ribosomal subunit protein uL23 (101 aa).

The protein belongs to the universal ribosomal protein uL23 family. As to quaternary structure, part of the 50S ribosomal subunit. Contacts protein L29, and trigger factor when it is bound to the ribosome.

One of the early assembly proteins it binds 23S rRNA. One of the proteins that surrounds the polypeptide exit tunnel on the outside of the ribosome. Forms the main docking site for trigger factor binding to the ribosome. The chain is Large ribosomal subunit protein uL23 from Azoarcus sp. (strain BH72).